The chain runs to 676 residues: MAKRKLNETDEPSVVTEPQTQKKTKKSSTEKKEKKEKKSKSQSVKPQEEKPEATQQQAQQQTEEEQELEQQLKDEQKQQDEKDEKKQSEKDDADLTFSDLGLDPRLVQAVAKQSFEKPTLVQRKAIPLALAGQDVLCKAKTGSGKTAAYVLPVLSGILKRKATDPTPFTSALILVPTRELADQVHKAIDAFSAFCTKDIQSAKLTDNVSDAVLRSLLANAPDVIVSTPARAWHNIESGALSVAKLQYLVLDEADLVLSYGYDEDMENIARSLPKGGVQTTMMSATLVSDELDTLKGFFCRNPTMLDLKEEFSNEDEKLTQFYVKCGEDDKWLISYLIFKLQLIKGPCLVFVADIDRAYRLKLFFEQFSIRSCVLNSELPINTRIKIIEEFNRGIYDIIIASDERSEVFLEDEKTEEKKEEQGEKKEGDEKKNGKGKKKKGRRDQEYGVSRGIDFKNVAAVINFDMPTSSSSYIHRIGRTARAGRAGIALSMVVPHDLFGKHKPTSIKQCEKDEKVLAKVMRQQAKLNRKLEPYNFNKDQMEAFRYRMNDALRAVTKVAIREARTRELRQELLRSETLKRYFEENPHELSHLRHDGELGTKMRQQAHLKHVPDYLLPQDGKNALTETQIGFVPFKKQGDDKKTRGKKGAKGGKGGHGKYKKGPGGRKNVLKTFRVRK.

The segment at 1–97 (MAKRKLNETD…SEKDDADLTF (97 aa)) is disordered. A compositionally biased stretch (basic and acidic residues) spans 70 to 90 (QQLKDEQKQQDEKDEKKQSEK). Positions 95–123 (LTFSDLGLDPRLVQAVAKQSFEKPTLVQR) match the Q motif motif. Positions 126-304 (IPLALAGQDV…KGFFCRNPTM (179 aa)) constitute a Helicase ATP-binding domain. Position 139-146 (139-146 (AKTGSGKT)) interacts with ATP. The DEAD box motif lies at 251-254 (DEAD). A Helicase C-terminal domain is found at 317 to 541 (KLTQFYVKCG…PYNFNKDQME (225 aa)). Over residues 410 to 432 (EDEKTEEKKEEQGEKKEGDEKKN) the composition is skewed to basic and acidic residues. Disordered regions lie at residues 410-444 (EDEK…RRDQ) and 633-676 (FKKQ…RVRK). The segment covering 642–663 (TRGKKGAKGGKGGHGKYKKGPG) has biased composition (basic residues).

This sequence belongs to the DEAD box helicase family. DDX56/DBP9 subfamily.

The protein localises to the nucleus. Its subcellular location is the nucleolus. It carries out the reaction ATP + H2O = ADP + phosphate + H(+). ATP-binding RNA helicase involved in the biogenesis of 60S ribosomal subunits and is required for the normal formation of 25S and 5.8S rRNAs. The sequence is that of ATP-dependent RNA helicase dbp-9 (dbp-9) from Neurospora crassa (strain ATCC 24698 / 74-OR23-1A / CBS 708.71 / DSM 1257 / FGSC 987).